A 232-amino-acid polypeptide reads, in one-letter code: Izumo sperm-egg fusion protein 4 (232 aa).

The N-terminal stretch at 1–15 is a signal peptide; that stretch reads MALLLCLVCLTAALA. N-linked (GlcNAc...) asparagine glycosylation is found at Asn-24 and Asn-219.

It belongs to the Izumo family. As to expression, detected in sperm.

The protein localises to the secreted. The chain is Izumo sperm-egg fusion protein 4 (IZUMO4) from Homo sapiens (Human).